Here is a 116-residue protein sequence, read N- to C-terminus: Ribosome-binding factor A (116 aa).

This sequence belongs to the RbfA family. Monomer. Binds 30S ribosomal subunits, but not 50S ribosomal subunits or 70S ribosomes.

The protein resides in the cytoplasm. In terms of biological role, one of several proteins that assist in the late maturation steps of the functional core of the 30S ribosomal subunit. Associates with free 30S ribosomal subunits (but not with 30S subunits that are part of 70S ribosomes or polysomes). Required for efficient processing of 16S rRNA. May interact with the 5'-terminal helix region of 16S rRNA. This chain is Ribosome-binding factor A, found in Clostridium botulinum (strain Eklund 17B / Type B).